A 356-amino-acid chain; its full sequence is S-adenosylmethionine:tRNA ribosyltransferase-isomerase (356 aa).

This sequence belongs to the QueA family. As to quaternary structure, monomer.

It localises to the cytoplasm. It carries out the reaction 7-aminomethyl-7-carbaguanosine(34) in tRNA + S-adenosyl-L-methionine = epoxyqueuosine(34) in tRNA + adenine + L-methionine + 2 H(+). It participates in tRNA modification; tRNA-queuosine biosynthesis. Its function is as follows. Transfers and isomerizes the ribose moiety from AdoMet to the 7-aminomethyl group of 7-deazaguanine (preQ1-tRNA) to give epoxyqueuosine (oQ-tRNA). The polypeptide is S-adenosylmethionine:tRNA ribosyltransferase-isomerase (Xanthomonas campestris pv. campestris (strain B100)).